Reading from the N-terminus, the 132-residue chain is Fluoride-specific ion channel FluC 1 (132 aa).

4 helical membrane-spanning segments follow: residues 9–29 (LAAV…LSAL), 35–55 (ASWP…VGYF), 72–89 (LLGT…TMQV), and 100–120 (WGLA…AVHL). Na(+) is bound by residues Gly-79 and Thr-82.

It belongs to the fluoride channel Fluc/FEX (TC 1.A.43) family.

Its subcellular location is the cell membrane. The enzyme catalyses fluoride(in) = fluoride(out). Na(+) is not transported, but it plays an essential structural role and its presence is essential for fluoride channel function. Its function is as follows. Fluoride-specific ion channel. Important for reducing fluoride concentration in the cell, thus reducing its toxicity. This chain is Fluoride-specific ion channel FluC 1, found in Mycolicibacterium paratuberculosis (strain ATCC BAA-968 / K-10) (Mycobacterium paratuberculosis).